A 392-amino-acid polypeptide reads, in one-letter code: tRNA (guanine-N(7)-)-methyltransferase (392 aa).

3 residues coordinate S-adenosyl-L-methionine: Glu-123, Glu-148, and Asp-175. Residues Lys-201 and Asp-231 each coordinate substrate.

Belongs to the class I-like SAM-binding methyltransferase superfamily. TrmB family.

The enzyme catalyses guanosine(46) in tRNA + S-adenosyl-L-methionine = N(7)-methylguanosine(46) in tRNA + S-adenosyl-L-homocysteine. It functions in the pathway tRNA modification; N(7)-methylguanine-tRNA biosynthesis. Catalyzes the formation of N(7)-methylguanine at position 46 (m7G46) in tRNA. The polypeptide is tRNA (guanine-N(7)-)-methyltransferase (Campylobacter jejuni subsp. jejuni serotype O:2 (strain ATCC 700819 / NCTC 11168)).